A 626-amino-acid polypeptide reads, in one-letter code: uncharacterized protein (626 aa).

The chain crosses the membrane as a helical span at residues 103 to 123; sequence AGALLVKFFPLLLLYPLTYLA. A Protein kinase domain is found at 200–618; sequence FENREPVGSG…DILEAARPFL (419 aa). ATP contacts are provided by residues 206–214 and lysine 311; that span reads VGSGCVAQV. The Proton acceptor role is filled by aspartate 445.

The protein belongs to the protein kinase superfamily. ADCK protein kinase family.

It localises to the mitochondrion. Its subcellular location is the membrane. In terms of biological role, the function of this protein is not yet clear. It is not known if it has protein kinase activity and what type of substrate it would phosphorylate (Ser, Thr or Tyr). Involved in the mitochondrial import of CoQ precursors, plays a role in muscle mitochondrial function and fatty acid beta-oxidation. This is an uncharacterized protein from Homo sapiens (Human).